The following is a 109-amino-acid chain: Resistin (109 aa).

An N-terminal signal peptide occupies residues 1–18 (MKALSFLFIPVLGLLVCG). Cystine bridges form between Cys51–Cys104, Cys63–Cys103, Cys72–Cys89, Cys74–Cys91, and Cys78–Cys93.

This sequence belongs to the resistin/FIZZ family. Homodimer; disulfide-linked.

It is found in the secreted. In terms of biological role, hormone that seems to suppress insulin ability to stimulate glucose uptake into adipose cells. Potentially links obesity to diabetes. The protein is Resistin (RETN) of Bos taurus (Bovine).